The following is a 410-amino-acid chain: Putative competence-damage inducible protein (410 aa).

This sequence belongs to the CinA family.

The polypeptide is Putative competence-damage inducible protein (Finegoldia magna (strain ATCC 29328 / DSM 20472 / WAL 2508) (Peptostreptococcus magnus)).